A 253-amino-acid polypeptide reads, in one-letter code: Polyprenal reductase (253 aa).

Transmembrane regions (helical) follow at residues 18-38 (LSFF…PEFL), 78-98 (FLSL…IIFG), 123-143 (HYLV…ISLY), and 200-220 (IIYS…VWVI).

This sequence belongs to the steroid 5-alpha reductase family. Polyprenal reductase subfamily.

It is found in the endoplasmic reticulum membrane. The enzyme catalyses a di-trans,poly-cis-dolichal + NADP(+) = a di-trans,poly-cis-polyprenal + NADPH + H(+). Its pathway is protein modification; protein glycosylation. Plays a key role in early steps of protein N-linked glycosylation by being involved in the conversion of polyprenol into dolichol. Acts as a polyprenal reductase that mediates the reduction of polyprenal into dolichal in a NADP-dependent mechanism. Dolichols are required for the synthesis of dolichol-linked monosaccharides and the oligosaccharide precursor used for N-glycosylation. This chain is Polyprenal reductase, found in Saccharomyces cerevisiae (strain ATCC 204508 / S288c) (Baker's yeast).